Consider the following 245-residue polypeptide: DnaJ homolog subfamily B member 6-B (245 aa).

One can recognise a J domain in the interval E3–G69.

As to quaternary structure, homooligomer.

The protein localises to the cytoplasm. It localises to the perinuclear region. It is found in the nucleus. Has a stimulatory effect on the ATPase activity of HSP70 in a dose-dependent and time-dependent manner and hence acts as a co-chaperone of HSP70. Plays an indispensable role in the organization of KRT8/KRT18 filaments. Acts as an endogenous molecular chaperone for neuronal proteins including huntingtin. Suppresses aggregation and toxicity of polyglutamine-containing, aggregation-prone proteins. Also reduces cellular toxicity and caspase-3 activity. This is DnaJ homolog subfamily B member 6-B (dnajb6-b) from Xenopus laevis (African clawed frog).